Reading from the N-terminus, the 240-residue chain is Peptidyl-tRNA hydrolase (240 aa).

Residue Tyr-14 coordinates tRNA. The active-site Proton acceptor is the His-19. TRNA is bound by residues Phe-64, Asn-66, and Asn-112. Positions 196 to 227 (EKPAQKQQPKQQSHIRQARSQQAPAKLPETGP) are disordered. Polar residues predominate over residues 209–218 (HIRQARSQQA).

This sequence belongs to the PTH family. Monomer.

The protein localises to the cytoplasm. The enzyme catalyses an N-acyl-L-alpha-aminoacyl-tRNA + H2O = an N-acyl-L-amino acid + a tRNA + H(+). Hydrolyzes ribosome-free peptidyl-tRNAs (with 1 or more amino acids incorporated), which drop off the ribosome during protein synthesis, or as a result of ribosome stalling. Its function is as follows. Catalyzes the release of premature peptidyl moieties from peptidyl-tRNA molecules trapped in stalled 50S ribosomal subunits, and thus maintains levels of free tRNAs and 50S ribosomes. This chain is Peptidyl-tRNA hydrolase, found in Mesorhizobium japonicum (strain LMG 29417 / CECT 9101 / MAFF 303099) (Mesorhizobium loti (strain MAFF 303099)).